Here is a 326-residue protein sequence, read N- to C-terminus: MDQDYRARLVYPFSGAISPHADIVDQATLAWAAMFGLLTDSLRHKSRRLQYGLLAARAYPRADREMLQIAADWIAWLFFMDDQCDETGIGRDLQRMIALHERFLAILDGATPEAHDCALTYALADLRRRLALRAPDNWLRRFSEHVRLYFTANRWETVNRQRGATPNVATYCAARLFSGAVYACFDLIELAEQIELPFYARHHSIVQQLEQAANNIICWCNDVLSYPKEMQHGDRHNLVLVIQGEHQCSLPEAIDRALDLHAREVATFVRKRTCVPYFDAAVNTALEKYVTGLQFWICANRDWSLTATRYAPTHKSQEMVMAVAQQ.

Residues Asp81 and Asp85 each coordinate Mg(2+). A DDXXD motif motif is present at residues 81–85; sequence DDQCD. A substrate-binding site is contributed by Arg175. 2 residues coordinate Mg(2+): Asn221 and Ser225. Lys228 provides a ligand contact to substrate. Glu229 provides a ligand contact to Mg(2+). A substrate-binding site is contributed by 309–310; the sequence is RY.

The protein belongs to the terpene synthase family. It depends on Mg(2+) as a cofactor.

It carries out the reaction (2E,6E)-farnesyl diphosphate + H2O = (+)-T-muurolol + diphosphate. The protein operates within secondary metabolite biosynthesis; terpenoid biosynthesis. Catalyzes the conversion of (2E,6E)-farnesyl diphosphate (FPP) into (+)-T-muurolol via a 1,10-cyclization, which requires isomerization of FPP to nerolidyl diphosphate (NPP) and then abstraction of the pyrophosphate from intermediate NPP leading to a (E,Z)-germacradienyl (helminthogermacradienyl) cation. The polypeptide is (+)-T-muurolol synthase ((2E,6E)-farnesyl diphosphate cyclizing) (Roseiflexus castenholzii (strain DSM 13941 / HLO8)).